The primary structure comprises 429 residues: Formate-dependent phosphoribosylglycinamide formyltransferase (429 aa).

N(1)-(5-phospho-beta-D-ribosyl)glycinamide-binding positions include 26-27 (EL) and E86. Residues R118, K159, 199–202 (EEHI), and E207 contribute to the ATP site. An ATP-grasp domain is found at 123-319 (ETLAREAKVP…EFGLHLRAVL (197 aa)). Mg(2+) is bound by residues E276 and E288. N(1)-(5-phospho-beta-D-ribosyl)glycinamide-binding positions include D295, K375, and 382–383 (RR).

Belongs to the PurK/PurT family. Homodimer.

The enzyme catalyses N(1)-(5-phospho-beta-D-ribosyl)glycinamide + formate + ATP = N(2)-formyl-N(1)-(5-phospho-beta-D-ribosyl)glycinamide + ADP + phosphate + H(+). Its pathway is purine metabolism; IMP biosynthesis via de novo pathway; N(2)-formyl-N(1)-(5-phospho-D-ribosyl)glycinamide from N(1)-(5-phospho-D-ribosyl)glycinamide (formate route): step 1/1. Its function is as follows. Involved in the de novo purine biosynthesis. Catalyzes the transfer of formate to 5-phospho-ribosyl-glycinamide (GAR), producing 5-phospho-ribosyl-N-formylglycinamide (FGAR). Formate is provided by PurU via hydrolysis of 10-formyl-tetrahydrofolate. This chain is Formate-dependent phosphoribosylglycinamide formyltransferase, found in Thermococcus kodakarensis (strain ATCC BAA-918 / JCM 12380 / KOD1) (Pyrococcus kodakaraensis (strain KOD1)).